The following is a 353-amino-acid chain: Rhodopsin (353 aa).

Residues 1 to 36 are Extracellular-facing; sequence MNGTEGPYFYVPMVNTSGIVRSPYEYPQYYLVNPAA. N-linked (GlcNAc...) asparagine glycans are attached at residues Asn-2 and Asn-15. The chain crosses the membrane as a helical span at residues 37–61; that stretch reads YAALGAYMFLLILVGFPINFLTLYV. The Cytoplasmic segment spans residues 62 to 73; sequence TIEHKKLRTPLN. Residues 74–96 traverse the membrane as a helical segment; sequence YILLNLAVADLFMVFGGFTTTMY. Topologically, residues 97–110 are extracellular; that stretch reads TSMHGYFVLGRLGC. Cys-110 and Cys-187 form a disulfide bridge. Residues 111–133 form a helical membrane-spanning segment; sequence NIEGFFATLGGEIALWSLVVLAI. Positions 134 to 136 match the 'Ionic lock' involved in activated form stabilization motif; that stretch reads ERW. The Cytoplasmic segment spans residues 134 to 152; that stretch reads ERWVVVCKPISNFRFGENH. A helical transmembrane segment spans residues 153-173; that stretch reads AIMGLAFTWLMALACAAPPLV. Residues 174 to 202 lie on the Extracellular side of the membrane; the sequence is GWSRYIPEGMQCSCGIDYYTRAEGFNNES. Residue Asn-200 is glycosylated (N-linked (GlcNAc...) asparagine). A helical membrane pass occupies residues 203–224; that stretch reads FVIYMFICHFSIPLLVVFFCYG. Over 225–252 the chain is Cytoplasmic; sequence RLLCAVKEAAAAQQESETTQRAEREVTR. Residues 253 to 274 traverse the membrane as a helical segment; the sequence is MVIMMVIAFLVCWLPYASVAWW. Residues 275-286 lie on the Extracellular side of the membrane; it reads IFTHQGSDFGPV. The chain crosses the membrane as a helical span at residues 287–308; the sequence is FMTIPAFFAKSSSIYNPMIYIC. Lys-296 is modified (N6-(retinylidene)lysine). Residues 309-353 lie on the Cytoplasmic side of the membrane; it reads LNKQFRHCMITTLCCGKNPFEEEEGASTASKTEASSVSSSSVSPA. 2 S-palmitoyl cysteine lipidation sites follow: Cys-322 and Cys-323. The disordered stretch occupies residues 331–353; it reads EEGASTASKTEASSVSSSSVSPA. Residues 334–353 show a composition bias toward low complexity; sequence ASTASKTEASSVSSSSVSPA.

It belongs to the G-protein coupled receptor 1 family. Opsin subfamily. Phosphorylated on some or all of the serine and threonine residues present in the C-terminal region. Post-translationally, contains one covalently linked retinal chromophore.

Its subcellular location is the membrane. It is found in the cell projection. The protein localises to the cilium. It localises to the photoreceptor outer segment. In terms of biological role, photoreceptor required for image-forming vision at low light intensity. While most salt water fish species use retinal as chromophore, most freshwater fish use 3-dehydroretinal, or a mixture of retinal and 3-dehydroretinal. Light-induced isomerization of 11-cis to all-trans retinal triggers a conformational change that activates signaling via G-proteins. Subsequent receptor phosphorylation mediates displacement of the bound G-protein alpha subunit by arrestin and terminates signaling. The sequence is that of Rhodopsin (rho) from Diplodus vulgaris (Common two-banded seabream).